The following is a 286-amino-acid chain: Phosphatidylserine decarboxylase proenzyme (286 aa).

Residues D90, H147, and S250 each act as charge relay system; for autoendoproteolytic cleavage activity in the active site. The Schiff-base intermediate with substrate; via pyruvic acid; for decarboxylase activity role is filled by S250. Pyruvic acid (Ser); by autocatalysis is present on S250.

The protein belongs to the phosphatidylserine decarboxylase family. PSD-B subfamily. Prokaryotic type I sub-subfamily. Heterodimer of a large membrane-associated beta subunit and a small pyruvoyl-containing alpha subunit. Pyruvate is required as a cofactor. Post-translationally, is synthesized initially as an inactive proenzyme. Formation of the active enzyme involves a self-maturation process in which the active site pyruvoyl group is generated from an internal serine residue via an autocatalytic post-translational modification. Two non-identical subunits are generated from the proenzyme in this reaction, and the pyruvate is formed at the N-terminus of the alpha chain, which is derived from the carboxyl end of the proenzyme. The autoendoproteolytic cleavage occurs by a canonical serine protease mechanism, in which the side chain hydroxyl group of the serine supplies its oxygen atom to form the C-terminus of the beta chain, while the remainder of the serine residue undergoes an oxidative deamination to produce ammonia and the pyruvoyl prosthetic group on the alpha chain. During this reaction, the Ser that is part of the protease active site of the proenzyme becomes the pyruvoyl prosthetic group, which constitutes an essential element of the active site of the mature decarboxylase.

The protein resides in the cell membrane. The catalysed reaction is a 1,2-diacyl-sn-glycero-3-phospho-L-serine + H(+) = a 1,2-diacyl-sn-glycero-3-phosphoethanolamine + CO2. It functions in the pathway phospholipid metabolism; phosphatidylethanolamine biosynthesis; phosphatidylethanolamine from CDP-diacylglycerol: step 2/2. Its function is as follows. Catalyzes the formation of phosphatidylethanolamine (PtdEtn) from phosphatidylserine (PtdSer). The chain is Phosphatidylserine decarboxylase proenzyme from Psychromonas ingrahamii (strain DSM 17664 / CCUG 51855 / 37).